Reading from the N-terminus, the 337-residue chain is 1-aminocyclopropane-1-carboxylate deaminase (337 aa).

Lys50 carries the post-translational modification N6-(pyridoxal phosphate)lysine. The Nucleophile role is filled by Ser77.

Belongs to the ACC deaminase/D-cysteine desulfhydrase family. As to quaternary structure, homotrimer. It depends on pyridoxal 5'-phosphate as a cofactor.

The catalysed reaction is 1-aminocyclopropane-1-carboxylate + H2O = 2-oxobutanoate + NH4(+). Functionally, catalyzes a cyclopropane ring-opening reaction, the irreversible conversion of 1-aminocyclopropane-1-carboxylate (ACC) to ammonia and alpha-ketobutyrate. Allows growth on ACC as a nitrogen source. This chain is 1-aminocyclopropane-1-carboxylate deaminase, found in Rhizobium radiobacter (Agrobacterium tumefaciens).